Reading from the N-terminus, the 220-residue chain is Charged multivesicular body protein 4b (220 aa).

Disordered stretches follow at residues 1–22 (MSLF…SPQE) and 180–220 (EIGD…WAAN). Coiled coils occupy residues 21–88 (QEAI…STIE) and 123–181 (IDKV…LLEI).

The protein belongs to the SNF7 family. In terms of assembly, probable core component of the endosomal sorting required for transport complex III (ESCRT-III). ESCRT-III components are thought to multimerize to form a flat lattice on the perimeter membrane of the endosome.

It is found in the cytoplasm. The protein resides in the cytosol. It localises to the late endosome membrane. Its subcellular location is the midbody. Its function is as follows. Probable core component of the endosomal sorting required for transport complex III (ESCRT-III) which is involved in multivesicular bodies (MVBs) formation and sorting of endosomal cargo proteins into MVBs. MVBs contain intraluminal vesicles (ILVs) that are generated by invagination and scission from the limiting membrane of the endosome and mostly are delivered to lysosomes enabling degradation of membrane proteins, such as stimulated growth factor receptors, lysosomal enzymes and lipids. This Danio rerio (Zebrafish) protein is Charged multivesicular body protein 4b (chmp4b).